The sequence spans 403 residues: L-cysteine:1D-myo-inositol 2-amino-2-deoxy-alpha-D-glucopyranoside ligase (403 aa).

Cysteine 43 contacts Zn(2+). L-cysteinyl-5'-AMP is bound by residues 43-46, threonine 58, and 81-83; these read CGIT and NTT. The 'HIGH' region signature appears at 45-55; the sequence is ITPYDATHLGH. A 'ERGGDP' region motif is present at residues 183–188; the sequence is ERGGDP. Residue tryptophan 223 coordinates L-cysteinyl-5'-AMP. Cysteine 227 is a binding site for Zn(2+). An L-cysteinyl-5'-AMP-binding site is contributed by 245–247; the sequence is GSD. Histidine 252 lines the Zn(2+) pocket. Valine 279 provides a ligand contact to L-cysteinyl-5'-AMP. A 'KMSKS' region motif is present at residues 285–289; the sequence is KMSKS.

The protein belongs to the class-I aminoacyl-tRNA synthetase family. MshC subfamily. In terms of assembly, monomer. The cofactor is Zn(2+).

It carries out the reaction 1D-myo-inositol 2-amino-2-deoxy-alpha-D-glucopyranoside + L-cysteine + ATP = 1D-myo-inositol 2-(L-cysteinylamino)-2-deoxy-alpha-D-glucopyranoside + AMP + diphosphate + H(+). Catalyzes the ATP-dependent condensation of GlcN-Ins and L-cysteine to form L-Cys-GlcN-Ins. In Thermobispora bispora (strain ATCC 19993 / DSM 43833 / CBS 139.67 / JCM 10125 / KCTC 9307 / NBRC 14880 / R51), this protein is L-cysteine:1D-myo-inositol 2-amino-2-deoxy-alpha-D-glucopyranoside ligase.